The following is a 133-amino-acid chain: Succinate dehydrogenase assembly factor 3, mitochondrial (133 aa).

A mitochondrion-targeting transit peptide spans 1–12 (MNNKLIYRSVRF).

The protein belongs to the complex I LYR family. SDHAF3 subfamily. In terms of assembly, interacts with SDH2 within an SDH1-SDH2 subcomplex.

It is found in the mitochondrion. The protein localises to the mitochondrion intermembrane space. The protein resides in the mitochondrion matrix. Plays an essential role in the assembly of succinate dehydrogenase (SDH), an enzyme complex (also referred to as respiratory complex II) that is a component of both the tricarboxylic acid (TCA) cycle and the mitochondrial electron transport chain, and which couples the oxidation of succinate to fumarate with the reduction of ubiquinone (coenzyme Q) to ubiquinol. Promotes maturation of the iron-sulfur protein subunit SDH2 of the SDH catalytic dimer, protecting it from the deleterious effects of oxidants. Acts together with SDHAF1 (SDH6). The sequence is that of Succinate dehydrogenase assembly factor 3, mitochondrial from Saccharomyces cerevisiae (strain ATCC 204508 / S288c) (Baker's yeast).